The chain runs to 125 residues: Small ribosomal subunit protein uS12 (125 aa).

Residues 1 to 24 form a disordered region; it reads MPTISQLVRKPRKAKRTKSKVPAL. A compositionally biased stretch (basic residues) spans 9-19; that stretch reads RKPRKAKRTKS. Aspartate 89 bears the 3-methylthioaspartic acid mark. Residues 101–125 are disordered; sequence SLDTAGVKDRKQARSKYGSKRPKSA. A compositionally biased stretch (basic residues) spans 113-125; sequence ARSKYGSKRPKSA.

The protein belongs to the universal ribosomal protein uS12 family. In terms of assembly, part of the 30S ribosomal subunit. Contacts proteins S8 and S17. May interact with IF1 in the 30S initiation complex.

Its function is as follows. With S4 and S5 plays an important role in translational accuracy. Interacts with and stabilizes bases of the 16S rRNA that are involved in tRNA selection in the A site and with the mRNA backbone. Located at the interface of the 30S and 50S subunits, it traverses the body of the 30S subunit contacting proteins on the other side and probably holding the rRNA structure together. The combined cluster of proteins S8, S12 and S17 appears to hold together the shoulder and platform of the 30S subunit. In Nitrosomonas europaea (strain ATCC 19718 / CIP 103999 / KCTC 2705 / NBRC 14298), this protein is Small ribosomal subunit protein uS12.